Reading from the N-terminus, the 464-residue chain is Asparagine--tRNA ligase (464 aa).

Belongs to the class-II aminoacyl-tRNA synthetase family. In terms of assembly, homodimer.

It localises to the cytoplasm. It catalyses the reaction tRNA(Asn) + L-asparagine + ATP = L-asparaginyl-tRNA(Asn) + AMP + diphosphate + H(+). This chain is Asparagine--tRNA ligase, found in Acetivibrio thermocellus (strain ATCC 27405 / DSM 1237 / JCM 9322 / NBRC 103400 / NCIMB 10682 / NRRL B-4536 / VPI 7372) (Clostridium thermocellum).